We begin with the raw amino-acid sequence, 727 residues long: C-terminal-binding protein 1 (727 aa).

The THAP-type zinc finger occupies Cys-5 to His-60. The segment at Gly-64–Gln-158 is disordered. The span at Thr-77–Ser-94 shows a compositional bias: basic and acidic residues. Residues Tyr-251, Leu-331 to Val-336, Asp-355, Cys-388 to Thr-394, Thr-415 to His-417, Asp-441, and His-467 to Trp-470 each bind NAD(+). Residues Ala-587–Ser-613 are compositionally biased toward low complexity. Disordered stretches follow at residues Ala-587–Ala-629 and Ala-652–Asn-681.

The protein belongs to the D-isomer specific 2-hydroxyacid dehydrogenase family. In terms of assembly, homodimer.

Binds DNA and represses gene expression. Plays a role in regulation of life span, possibly by regulating transcription of genes important for lipid metabolism. The protein is C-terminal-binding protein 1 of Caenorhabditis elegans.